An 82-amino-acid polypeptide reads, in one-letter code: Chlorosome protein E (82 aa).

His26 contacts a bacteriochlorophyll c. Residues 55-82 are disordered; sequence GSSGLKGSSPKYSGYATPSKEVKSRFEK. Positions 59-69 are enriched in low complexity; the sequence is LKGSSPKYSGY.

It belongs to the BChl C/E-binding protein family.

Its subcellular location is the chlorosome. It localises to the chlorosome envelope. Component of the photosynthetic apparatus. The light harvesting B740 complex binds bacteriochlorophyll c. This Chlorobaculum tepidum (strain ATCC 49652 / DSM 12025 / NBRC 103806 / TLS) (Chlorobium tepidum) protein is Chlorosome protein E (csmE).